Here is a 112-residue protein sequence, read N- to C-terminus: Cell cycle protein GpsB (112 aa).

A coiled-coil region spans residues 32-75 (LDDIIKDYETYISTIEELRQENTRLKEEVKQAKKRQEAAQTTVS).

It belongs to the GpsB family. In terms of assembly, forms polymers through the coiled coil domains. Interacts with PBP1, MreC and EzrA.

The protein resides in the cytoplasm. Divisome component that associates with the complex late in its assembly, after the Z-ring is formed, and is dependent on DivIC and PBP2B for its recruitment to the divisome. Together with EzrA, is a key component of the system that regulates PBP1 localization during cell cycle progression. Its main role could be the removal of PBP1 from the cell pole after pole maturation is completed. Also contributes to the recruitment of PBP1 to the division complex. Not essential for septum formation. This chain is Cell cycle protein GpsB, found in Streptococcus mutans serotype c (strain ATCC 700610 / UA159).